Consider the following 481-residue polypeptide: Argininosuccinate lyase (481 aa).

Belongs to the lyase 1 family. Argininosuccinate lyase subfamily.

It is found in the cytoplasm. The catalysed reaction is 2-(N(omega)-L-arginino)succinate = fumarate + L-arginine. It participates in amino-acid biosynthesis; L-arginine biosynthesis; L-arginine from L-ornithine and carbamoyl phosphate: step 3/3. The chain is Argininosuccinate lyase from Kineococcus radiotolerans (strain ATCC BAA-149 / DSM 14245 / SRS30216).